Reading from the N-terminus, the 162-residue chain is MSEHPVATLQEDIAPRLPLSSLTLFEAKKKKNLSFEAIAQAVGRNEVAIAALFYGQAMASPEDIKALSKVLDIPVEVLESQLSGFPDRGRSLEMPPKDPLVYRLYEIVQNYGPAYKAILNEKFGDGIMSAISFSTKVEKETDEKGEWAKITLRGKWLPYSRF.

Active-site residues include Arg-103, Glu-106, and Ser-129.

This sequence belongs to the cyanase family.

The enzyme catalyses cyanate + hydrogencarbonate + 3 H(+) = NH4(+) + 2 CO2. In terms of biological role, catalyzes the reaction of cyanate with bicarbonate to produce ammonia and carbon dioxide. This chain is Cyanate hydratase, found in Phaeosphaeria nodorum (strain SN15 / ATCC MYA-4574 / FGSC 10173) (Glume blotch fungus).